The chain runs to 310 residues: MSQAIVVAALYKFVTLEDYVELREPLLKTMLDNNVKGTLLLAHEGINGTVSGTREGIDGLLAWLRNDPRLVDVDHKESYCDEQPFYRTKVKLKKEIVTLGVPGVDPNQAVGTYVEPKDWNALISDPEVLLIDTRNDYEVAIGTFKGAIDPKTETFREFPEYIKANFDPSKHKKVAMFCTGGIRCEKASSYMLGEGFESVYHLKGGILKYFEEVPQEESLWDGDCFVFDNRVTVRHDLSEGEYDQCHACRHPINAEERASEHYSPGVSCPHCWDSLSEKTRRSAIDRQKQIELAKARNLPHPIGYNYKAEA.

In terms of domain architecture, Rhodanese spans 124–218; sequence SDPEVLLIDT…YFEEVPQEES (95 aa). Cys178 functions as the Cysteine persulfide intermediate in the catalytic mechanism.

This sequence belongs to the TrhO family.

The catalysed reaction is uridine(34) in tRNA + AH2 + O2 = 5-hydroxyuridine(34) in tRNA + A + H2O. Catalyzes oxygen-dependent 5-hydroxyuridine (ho5U) modification at position 34 in tRNAs. The chain is tRNA uridine(34) hydroxylase from Pseudomonas putida (strain ATCC 700007 / DSM 6899 / JCM 31910 / BCRC 17059 / LMG 24140 / F1).